The chain runs to 353 residues: Peroxidase 34 (353 aa).

The first 30 residues, 1 to 30 (MHFSSSSTSSTWTILITLGCLMLHASLSAA), serve as a signal peptide directing secretion. A Pyrrolidone carboxylic acid modification is found at Gln-31. 4 cysteine pairs are disulfide-bonded: Cys-41-Cys-121, Cys-74-Cys-79, Cys-127-Cys-331, and Cys-207-Cys-239. The N-linked (GlcNAc...) asparagine glycan is linked to Asn-43. His-72 (proton acceptor) is an active-site residue. The Ca(2+) site is built by Asp-73, Val-76, Gly-78, Asp-80, and Ser-82. Residue Asn-87 is glycosylated (N-linked (GlcNAc...) asparagine). Residue Pro-169 participates in substrate binding. His-200 serves as a coordination point for heme b. Thr-201 is a binding site for Ca(2+). N-linked (GlcNAc...) asparagine glycans are attached at residues Asn-216, Asn-228, and Asn-244. 3 residues coordinate Ca(2+): Asp-252, Thr-255, and Asp-260. An N-linked (GlcNAc...) asparagine glycan is attached at Asn-285.

This sequence belongs to the peroxidase family. Classical plant (class III) peroxidase subfamily. Heme b serves as cofactor. The cofactor is Ca(2+). In terms of tissue distribution, preferentially expressed in roots, but also detected in flowers, leaves and stems.

The protein localises to the secreted. It localises to the vacuole. The enzyme catalyses 2 a phenolic donor + H2O2 = 2 a phenolic radical donor + 2 H2O. Removal of H(2)O(2), oxidation of toxic reductants, biosynthesis and degradation of lignin, suberization, auxin catabolism, response to environmental stresses such as wounding, pathogen attack and oxidative stress. These functions might be dependent on each isozyme/isoform in each plant tissue. Its function is as follows. May be implicated in the systemic acquired resistance response via the salicylic acid signal transduction pathway. Exhibits a Ca(2+)-pectate binding affinity which could be interpreted in vivo as a specificity to interact with the pectic structure of the cell wall. This chain is Peroxidase 34 (PER34), found in Arabidopsis thaliana (Mouse-ear cress).